The primary structure comprises 248 residues: Polyhedrin (248 aa).

Residues 1–27 (MADVAGTSNRDFRGREQRLFNSEQYNY) form the signal peptide. Asn-28, Asn-77, Asn-86, and Asn-237 each carry an N-linked (GlcNAc...) asparagine; by host glycan.

It is found in the host cytoplasm. In terms of biological role, major component of the virus occlusion bodies, which are large proteinaceous structures (polyhedra), that protect the virus from the outside environment for extended periods until they are ingested by insect larvae. The polypeptide is Polyhedrin (Bombyx mori cytoplasmic polyhedrosis virus (BmCPV)).